The chain runs to 235 residues: Chromosome partition protein MukE (235 aa).

Residues 204-235 are disordered; that stretch reads QQEPSQSSLLDGFDADDTGHHDSELTMQEGEV.

The protein belongs to the MukE family. In terms of assembly, interacts, and probably forms a ternary complex, with MukF and MukB. The complex formation is stimulated by calcium or magnesium.

The protein resides in the cytoplasm. Its subcellular location is the nucleoid. Functionally, involved in chromosome condensation, segregation and cell cycle progression. May participate in facilitating chromosome segregation by condensation DNA from both sides of a centrally located replisome during cell division. Probably acts via its interaction with MukB and MukF. This chain is Chromosome partition protein MukE, found in Photobacterium profundum (strain SS9).